The following is a 564-amino-acid chain: MQLAVRQEDADILLKQKNVLDELVVEKYRVAGQITQTALAYITSLINNSYHLQTSPKLTIQQLCLLTDSFLLKLLSRQYVNKVNEKGIAHPTTINVNQLLNGFSPEIDDEREFFLNQGDVVTISLGVHIDGYTSQVSHTLVIYPPSADAKPEGPLLGSNADALCACHLATESVVVLLGCSLSPEKLPANLKNVSNTVTGSQIRELVDAIADSFNCVVVPGSKIRRVRRFLAGQAEGIVAERDFKGVVWDESHQEARLLKQSNNTSTDLILSDSNKPVQTNNSSAIPTDDFVVVPGEVYQIDIRMTGLSDVNEIGIVTTEEIDHFTGKNNKQDFNAKSSIFIRDFAVTHQLKLKTSKKLLGEIDRQFSVYPFKLDYASKNFPINTESSEDEIKQQIAAIGQDMKSNRLGAAELSNRHLIQPKPIQTTKFIPLKEILLSANPTGKHGIDATKPVLPGMEIPLPNLGVSSLKLKSLLKTGRSINNVRESTTVAINENNQELIRLTGGEATAKSNWVHSQYKLPASLNETIGQLVQISKDKRFGIKIKEVVPYKVQQSNMSVESMQID.

Belongs to the peptidase M24 family. Component of the nucleoplasmic and cytoplasmic pre-60S ribosomal particles.

It localises to the cytoplasm. The protein localises to the nucleus. Probable metalloprotease involved in proper assembly of pre-ribosomal particles during the biogenesis of the 60S ribosomal subunit. Accompanies the pre-60S particles to the cytoplasm. The chain is Probable metalloprotease ARX1 (ARX1) from Candida albicans (strain SC5314 / ATCC MYA-2876) (Yeast).